The primary structure comprises 922 residues: Ubiquitin carboxyl-terminal hydrolase 29 (922 aa).

A disordered region spans residues 160-196 (GILENQGGKGQNTLSSDVQTNEDILKEDNPVPNKKYK). The segment covering 170 to 181 (QNTLSSDVQTNE) has biased composition (polar residues). Positions 285–885 (QGFPNLGNTC…SGYIFFYMHN (601 aa)) constitute a USP domain. Catalysis depends on C294, which acts as the Nucleophile. H840 serves as the catalytic Proton acceptor.

This sequence belongs to the peptidase C19 family.

It is found in the cytoplasm. The protein localises to the perinuclear region. It carries out the reaction Thiol-dependent hydrolysis of ester, thioester, amide, peptide and isopeptide bonds formed by the C-terminal Gly of ubiquitin (a 76-residue protein attached to proteins as an intracellular targeting signal).. In terms of biological role, deubiquitinase involved in innate antiviral immunity by mediating 'Lys-48'-linked deubiquitination of CGAS, thereby promoting its stabilization. In Homo sapiens (Human), this protein is Ubiquitin carboxyl-terminal hydrolase 29.